Consider the following 189-residue polypeptide: Dynactin subunit 6 (189 aa).

This sequence belongs to the dynactin subunits 5/6 family. Dynactin subunit 6 subfamily. In terms of assembly, subunit of dynactin, a multiprotein complex part of a tripartite complex with dynein and a adapter, such as BICDL1, BICD2 or HOOK3. The dynactin complex is built around ACTR1A/ACTB filament and consists of an actin-related filament composed of a shoulder domain, a pointed end and a barbed end.

The protein resides in the cytoplasm. It localises to the cytoskeleton. Functionally, part of the dynactin complex that activates the molecular motor dynein for ultra-processive transport along microtubules. The sequence is that of Dynactin subunit 6 (dynF) from Dictyostelium discoideum (Social amoeba).